A 117-amino-acid chain; its full sequence is Large ribosomal subunit protein bL19 (117 aa).

This sequence belongs to the bacterial ribosomal protein bL19 family.

In terms of biological role, this protein is located at the 30S-50S ribosomal subunit interface and may play a role in the structure and function of the aminoacyl-tRNA binding site. The protein is Large ribosomal subunit protein bL19 of Exiguobacterium sp. (strain ATCC BAA-1283 / AT1b).